The primary structure comprises 172 residues: Large ribosomal subunit protein uL10 (172 aa).

This sequence belongs to the universal ribosomal protein uL10 family. Part of the ribosomal stalk of the 50S ribosomal subunit. The N-terminus interacts with L11 and the large rRNA to form the base of the stalk. The C-terminus forms an elongated spine to which L12 dimers bind in a sequential fashion forming a multimeric L10(L12)X complex.

Forms part of the ribosomal stalk, playing a central role in the interaction of the ribosome with GTP-bound translation factors. In Chlamydia trachomatis serovar D (strain ATCC VR-885 / DSM 19411 / UW-3/Cx), this protein is Large ribosomal subunit protein uL10 (rplJ).